A 226-amino-acid polypeptide reads, in one-letter code: PKHD-type hydroxylase Daci_1172 (226 aa).

Residues 78–178 (KVLPPRFNRY…RYASFFWTHS (101 aa)) enclose the Fe2OG dioxygenase domain. Fe cation is bound by residues His-96, Asp-98, and His-159. Arg-169 serves as a coordination point for 2-oxoglutarate.

Requires Fe(2+) as cofactor. L-ascorbate is required as a cofactor.

In Delftia acidovorans (strain DSM 14801 / SPH-1), this protein is PKHD-type hydroxylase Daci_1172.